Reading from the N-terminus, the 361-residue chain is MAGNSIGQLFRVTTFGESHGTALGCIVDGVPPGLPLTQADLQVDLDRRKPGTSRYTTQRREPDQVRILSGVFNGVTTGTSIGLLIENTDQRSQDYSEIKDVFRPGHADYTYEQKYGLRDYRGGGRSSARETAMRVAAGAIAKKYLKQKFGIEVKGYLSQLGPISCELVDWSIVETNPFFCPDPSRLDALDEYMRALKKEGNSIGAKVTVVAEGVPAGLGEPVFDRLDADLAHALMSINAVKGVEIGDGFDVVTLKGTENRDEITKEGFSSNHAGGVLGGISSGQPIIAHIALKPTSSITIAGKTLNRQGEEVDMITKGRHDPCVGIRAVPIAEAMMAIVLLDHALRQRGQCGDVIPPLMQW.

NADP(+) is bound by residues R48 and R54. FMN-binding positions include 125–127 (RSS), 238–239 (NA), G278, 293–297 (KPTSS), and R319.

It belongs to the chorismate synthase family. As to quaternary structure, homotetramer. The cofactor is FMNH2.

It carries out the reaction 5-O-(1-carboxyvinyl)-3-phosphoshikimate = chorismate + phosphate. Its pathway is metabolic intermediate biosynthesis; chorismate biosynthesis; chorismate from D-erythrose 4-phosphate and phosphoenolpyruvate: step 7/7. In terms of biological role, catalyzes the anti-1,4-elimination of the C-3 phosphate and the C-6 proR hydrogen from 5-enolpyruvylshikimate-3-phosphate (EPSP) to yield chorismate, which is the branch point compound that serves as the starting substrate for the three terminal pathways of aromatic amino acid biosynthesis. This reaction introduces a second double bond into the aromatic ring system. The polypeptide is Chorismate synthase (Proteus mirabilis (strain HI4320)).